The following is a 97-amino-acid chain: Large ribosomal subunit protein bL28 (97 aa).

This sequence belongs to the bacterial ribosomal protein bL28 family.

This chain is Large ribosomal subunit protein bL28, found in Rickettsia akari (strain Hartford).